A 323-amino-acid chain; its full sequence is Acetyl-coenzyme A carboxylase carboxyl transferase subunit alpha (323 aa).

Residues 39 to 293 (RLSKKSQQLT…RRALADSLRQ (255 aa)) form the CoA carboxyltransferase C-terminal domain.

The protein belongs to the AccA family. In terms of assembly, acetyl-CoA carboxylase is a heterohexamer composed of biotin carboxyl carrier protein (AccB), biotin carboxylase (AccC) and two subunits each of ACCase subunit alpha (AccA) and ACCase subunit beta (AccD).

It localises to the cytoplasm. The catalysed reaction is N(6)-carboxybiotinyl-L-lysyl-[protein] + acetyl-CoA = N(6)-biotinyl-L-lysyl-[protein] + malonyl-CoA. It participates in lipid metabolism; malonyl-CoA biosynthesis; malonyl-CoA from acetyl-CoA: step 1/1. Its function is as follows. Component of the acetyl coenzyme A carboxylase (ACC) complex. First, biotin carboxylase catalyzes the carboxylation of biotin on its carrier protein (BCCP) and then the CO(2) group is transferred by the carboxyltransferase to acetyl-CoA to form malonyl-CoA. In Burkholderia vietnamiensis (strain G4 / LMG 22486) (Burkholderia cepacia (strain R1808)), this protein is Acetyl-coenzyme A carboxylase carboxyl transferase subunit alpha.